A 393-amino-acid chain; its full sequence is Pigment production hydroxylase (393 aa).

Involved in pigment production acting as a hydroxylase that transforms indole to indoxyl, resulting in the formation of indigo. This is Pigment production hydroxylase from Rhodococcus erythropolis (Arthrobacter picolinophilus).